Here is a 400-residue protein sequence, read N- to C-terminus: Tryptophan synthase beta chain (400 aa).

An N6-(pyridoxal phosphate)lysine modification is found at K92.

Belongs to the TrpB family. Tetramer of two alpha and two beta chains. Pyridoxal 5'-phosphate serves as cofactor.

The enzyme catalyses (1S,2R)-1-C-(indol-3-yl)glycerol 3-phosphate + L-serine = D-glyceraldehyde 3-phosphate + L-tryptophan + H2O. It functions in the pathway amino-acid biosynthesis; L-tryptophan biosynthesis; L-tryptophan from chorismate: step 5/5. Its function is as follows. The beta subunit is responsible for the synthesis of L-tryptophan from indole and L-serine. This is Tryptophan synthase beta chain from Chromobacterium violaceum (strain ATCC 12472 / DSM 30191 / JCM 1249 / CCUG 213 / NBRC 12614 / NCIMB 9131 / NCTC 9757 / MK).